The sequence spans 155 residues: Cyanate hydratase (155 aa).

Catalysis depends on residues arginine 101, glutamate 104, and serine 127.

The protein belongs to the cyanase family.

It carries out the reaction cyanate + hydrogencarbonate + 3 H(+) = NH4(+) + 2 CO2. Its function is as follows. Catalyzes the reaction of cyanate with bicarbonate to produce ammonia and carbon dioxide. This is Cyanate hydratase from Coccidioides posadasii (strain C735) (Valley fever fungus).